Consider the following 413-residue polypeptide: uncharacterized protein (413 aa).

Positions 1–22 (MKKSKASALLWLFSLVGFMLHA) are cleaved as a signal peptide.

It localises to the periplasm. In terms of biological role, may be involved in ulvan degradation. Ulvan is the main polysaccharide component of the Ulvales (green seaweed) cell wall. It is composed of disaccharide building blocks comprising 3-sulfated rhamnose (Rha3S) linked to D-glucuronic acid (GlcA), L-iduronic acid (IduA), or D-xylose (Xyl). This is an uncharacterized protein from Formosa agariphila (strain DSM 15362 / KCTC 12365 / LMG 23005 / KMM 3901 / M-2Alg 35-1).